We begin with the raw amino-acid sequence, 339 residues long: Transcription initiation factor IIB (339 aa).

Residues 39–70 (EELICPVCGSKNIIKDYERAEIVCEMCGCVLQ) form a TFIIB-type zinc finger. Positions 43, 46, 62, and 65 each coordinate Zn(2+). A run of 2 repeats spans residues 156 to 239 (SELD…SREL) and 250 to 331 (DYVP…ELTE).

This sequence belongs to the TFIIB family.

In terms of biological role, stabilizes TBP binding to an archaeal box-A promoter. Also responsible for recruiting RNA polymerase II to the pre-initiation complex (DNA-TBP-TFIIB). The protein is Transcription initiation factor IIB of Methanococcus maripaludis (strain C6 / ATCC BAA-1332).